Consider the following 306-residue polypeptide: Leucotoxin LukEv (306 aa).

The first 23 residues, 1–23 (MLAATLSVGLIAPLASPIQESRA), serve as a signal peptide directing secretion.

This sequence belongs to the aerolysin family. Toxicity requires sequential binding and synergistic association of a class S and a class F component which form heterooligomeric complexes. LukEv (class S) associates with LukDv (class F).

It localises to the secreted. Functionally, part of a bi-component leucotoxin that acts by forming pores in the membrane of the target cells. The activity of LukEv-LukDv to rabbit leukocytes is similar to that of the Panton-Valentine leucocidin (PVL). LukEv-LukDv is hemolytic to rabbit red blood cells although the activity is only 8% of gamma-hemolysin. This chain is Leucotoxin LukEv (lukEv), found in Staphylococcus aureus (strain NCTC 8325 / PS 47).